The chain runs to 236 residues: Phosphoribosylaminoimidazole-succinocarboxamide synthase (236 aa).

The protein belongs to the SAICAR synthetase family.

It catalyses the reaction 5-amino-1-(5-phospho-D-ribosyl)imidazole-4-carboxylate + L-aspartate + ATP = (2S)-2-[5-amino-1-(5-phospho-beta-D-ribosyl)imidazole-4-carboxamido]succinate + ADP + phosphate + 2 H(+). Its pathway is purine metabolism; IMP biosynthesis via de novo pathway; 5-amino-1-(5-phospho-D-ribosyl)imidazole-4-carboxamide from 5-amino-1-(5-phospho-D-ribosyl)imidazole-4-carboxylate: step 1/2. The protein is Phosphoribosylaminoimidazole-succinocarboxamide synthase of Rickettsia africae (strain ESF-5).